The following is a 290-amino-acid chain: Sodium/potassium-transporting ATPase subunit beta-2 (290 aa).

Over 1-39 the chain is Cytoplasmic; it reads MVIQKEKKSCGQVVEEWKEFVWNPRTHQFMGRTGTSWAF. A helical; Signal-anchor for type II membrane protein transmembrane segment spans residues 40 to 67; that stretch reads ILLFYLVFYGFLTAMFTLTMWVMLQTVS. Over 68–290 the chain is Extracellular; it reads DHTPKYQDRL…VAFKLRINKT (223 aa). N-linked (GlcNAc...) asparagine glycosylation is found at asparagine 96 and asparagine 118. Residues cysteine 129 and cysteine 150 are joined by a disulfide bond. Residue asparagine 153 is glycosylated (N-linked (GlcNAc...) asparagine). Cysteines 160 and 177 form a disulfide. N-linked (GlcNAc...) asparagine glycans are attached at residues asparagine 193, asparagine 197, and asparagine 238. The immunoglobulin-like stretch occupies residues 193 to 289; it reads NQSMNVTCVG…RVAFKLRINK (97 aa). A disulfide bond links cysteine 200 and cysteine 261.

The protein belongs to the X(+)/potassium ATPases subunit beta family. The sodium/potassium-transporting ATPase is composed of a catalytic alpha subunit, an auxiliary non-catalytic beta subunit and an additional regulatory subunit. Interacts with BSG.

Its subcellular location is the cell membrane. Functionally, this is the non-catalytic component of the active enzyme, which catalyzes the hydrolysis of ATP coupled with the exchange of Na(+) and K(+) ions across the plasma membrane. The exact function of the beta-2 subunit is not known. Its function is as follows. Mediates cell adhesion of neurons and astrocytes, and promotes neurite outgrowth. The polypeptide is Sodium/potassium-transporting ATPase subunit beta-2 (ATP1B2) (Bos taurus (Bovine)).